We begin with the raw amino-acid sequence, 272 residues long: Ribosomal RNA small subunit methyltransferase A (272 aa).

S-adenosyl-L-methionine-binding residues include asparagine 16, leucine 18, glycine 43, glutamate 64, aspartate 89, and asparagine 110.

The protein belongs to the class I-like SAM-binding methyltransferase superfamily. rRNA adenine N(6)-methyltransferase family. RsmA subfamily.

It localises to the cytoplasm. It carries out the reaction adenosine(1518)/adenosine(1519) in 16S rRNA + 4 S-adenosyl-L-methionine = N(6)-dimethyladenosine(1518)/N(6)-dimethyladenosine(1519) in 16S rRNA + 4 S-adenosyl-L-homocysteine + 4 H(+). Functionally, specifically dimethylates two adjacent adenosines (A1518 and A1519) in the loop of a conserved hairpin near the 3'-end of 16S rRNA in the 30S particle. May play a critical role in biogenesis of 30S subunits. The protein is Ribosomal RNA small subunit methyltransferase A of Pseudomonas fluorescens (strain Pf0-1).